A 621-amino-acid polypeptide reads, in one-letter code: Ubiquitin-like-specific protease 1 (621 aa).

Ser-2 carries the post-translational modification N-acetylserine. Ser-21 and Ser-25 each carry phosphoserine. 2 disordered regions span residues 116 to 150 and 169 to 196; these read FDGSEVEASGNSDVESRSSGSRSSDVPYGLRENYS and RRRIESEGVGTPSTSPISSLASQKSNCD. The segment covering 124–141 has biased composition (low complexity); sequence SGNSDVESRSSGSRSSDV. Thr-179 is subject to Phosphothreonine. The segment covering 179-196 has biased composition (polar residues); sequence TPSTSPISSLASQKSNCD. Ser-264 carries the phosphoserine modification. The tract at residues 432–621 is protease; sequence NIEITVRDFK…AHLILTDALK (190 aa). Active-site residues include His-514, Asp-531, and Cys-580.

It belongs to the peptidase C48 family.

It carries out the reaction Hydrolysis of the alpha-linked peptide bond in the sequence Gly-Gly-|-Ala-Thr-Tyr at the C-terminal end of the small ubiquitin-like modifier (SUMO) propeptide, Smt3, leading to the mature form of the protein. A second reaction involves the cleavage of an epsilon-linked peptide bond between the C-terminal glycine of the mature SUMO and the lysine epsilon-amino group of the target protein.. In terms of biological role, protease that catalyzes two essential functions in the SUMO pathway: processing of full-length SMT3 to its mature form and deconjugation of SMT3 from targeted proteins. Has an essential role in the G2/M phase of the cell cycle. This Saccharomyces cerevisiae (strain ATCC 204508 / S288c) (Baker's yeast) protein is Ubiquitin-like-specific protease 1 (ULP1).